We begin with the raw amino-acid sequence, 384 residues long: Probable tRNA sulfurtransferase (384 aa).

In terms of domain architecture, THUMP spans 57–160 (EEVVDRVRNV…KKTYIYSKRI (104 aa)). ATP-binding positions include 177-178 (ML), 202-203 (YF), Arg259, Gly281, and Gln290.

Belongs to the ThiI family.

The protein localises to the cytoplasm. It catalyses the reaction [ThiI sulfur-carrier protein]-S-sulfanyl-L-cysteine + a uridine in tRNA + 2 reduced [2Fe-2S]-[ferredoxin] + ATP + H(+) = [ThiI sulfur-carrier protein]-L-cysteine + a 4-thiouridine in tRNA + 2 oxidized [2Fe-2S]-[ferredoxin] + AMP + diphosphate. It carries out the reaction [ThiS sulfur-carrier protein]-C-terminal Gly-Gly-AMP + S-sulfanyl-L-cysteinyl-[cysteine desulfurase] + AH2 = [ThiS sulfur-carrier protein]-C-terminal-Gly-aminoethanethioate + L-cysteinyl-[cysteine desulfurase] + A + AMP + 2 H(+). Its pathway is cofactor biosynthesis; thiamine diphosphate biosynthesis. Catalyzes the ATP-dependent transfer of a sulfur to tRNA to produce 4-thiouridine in position 8 of tRNAs, which functions as a near-UV photosensor. Also catalyzes the transfer of sulfur to the sulfur carrier protein ThiS, forming ThiS-thiocarboxylate. This is a step in the synthesis of thiazole, in the thiamine biosynthesis pathway. The sulfur is donated as persulfide by IscS. The protein is Probable tRNA sulfurtransferase of Clostridium acetobutylicum (strain ATCC 824 / DSM 792 / JCM 1419 / IAM 19013 / LMG 5710 / NBRC 13948 / NRRL B-527 / VKM B-1787 / 2291 / W).